The following is a 319-amino-acid chain: Beta-ketoacyl-[acyl-carrier-protein] synthase III (319 aa).

Active-site residues include Cys-115 and His-246. An ACP-binding region spans residues 247–251; the sequence is QANLR. The active site involves Asn-276.

The protein belongs to the thiolase-like superfamily. FabH family. Homodimer.

The protein localises to the cytoplasm. The enzyme catalyses malonyl-[ACP] + acetyl-CoA + H(+) = 3-oxobutanoyl-[ACP] + CO2 + CoA. Its pathway is lipid metabolism; fatty acid biosynthesis. In terms of biological role, catalyzes the condensation reaction of fatty acid synthesis by the addition to an acyl acceptor of two carbons from malonyl-ACP. Catalyzes the first condensation reaction which initiates fatty acid synthesis and may therefore play a role in governing the total rate of fatty acid production. Possesses both acetoacetyl-ACP synthase and acetyl transacylase activities. Its substrate specificity determines the biosynthesis of branched-chain and/or straight-chain of fatty acids. This is Beta-ketoacyl-[acyl-carrier-protein] synthase III from Coxiella burnetii (strain Dugway 5J108-111).